The following is a 429-amino-acid chain: Adenylosuccinate synthetase (429 aa).

GTP is bound by residues G12 to K18 and G40 to T42. D13 (proton acceptor) is an active-site residue. Residues D13 and G40 each coordinate Mg(2+). IMP is bound by residues D13–K16, N38–H41, T128, R142, Q223, T238, and R302. The active-site Proton donor is the H41. Residue V298–R304 participates in substrate binding. GTP is bound by residues R304, K330 to D332, and G412 to G414.

The protein belongs to the adenylosuccinate synthetase family. In terms of assembly, homodimer. Mg(2+) is required as a cofactor.

Its subcellular location is the cytoplasm. It carries out the reaction IMP + L-aspartate + GTP = N(6)-(1,2-dicarboxyethyl)-AMP + GDP + phosphate + 2 H(+). Its pathway is purine metabolism; AMP biosynthesis via de novo pathway; AMP from IMP: step 1/2. Its function is as follows. Plays an important role in the de novo pathway of purine nucleotide biosynthesis. Catalyzes the first committed step in the biosynthesis of AMP from IMP. This Renibacterium salmoninarum (strain ATCC 33209 / DSM 20767 / JCM 11484 / NBRC 15589 / NCIMB 2235) protein is Adenylosuccinate synthetase.